The sequence spans 512 residues: Pantetheinase (512 aa).

Positions 1–23 (MGMSWWLACAAAFSALCVLKASS) are cleaved as a signal peptide. In terms of domain architecture, CN hydrolase spans 32–308 (YEHAVILPKD…GKLLFAQLKS (277 aa)). Residue Glu81 is the Proton acceptor of the active site. Asn132 and Asn148 each carry an N-linked (GlcNAc...) asparagine glycan. Residue Lys180 is the Proton donor of the active site. The active-site Nucleophile is Cys213. Residues Asn316 and Asn354 are each glycosylated (N-linked (GlcNAc...) asparagine). Asn488 carries GPI-anchor amidated asparagine lipidation. Positions 489–512 (ASSDFIAHSLIIMLIVTPIIHYLC) are cleaved as a propeptide — removed in mature form.

The protein belongs to the carbon-nitrogen hydrolase superfamily. BTD/VNN family. Monomer. Post-translationally, N-glycosylated. In terms of tissue distribution, detected in kidney (at protein level). Ubiquitous.

The protein resides in the cell membrane. It carries out the reaction (R)-pantetheine + H2O = cysteamine + (R)-pantothenate. Its function is as follows. Amidohydrolase that hydrolyzes specifically one of the carboamide linkages in D-pantetheine thus recycling pantothenic acid (vitamin B5) and releasing cysteamine. The sequence is that of Pantetheinase (Vnn1) from Mus musculus (Mouse).